The chain runs to 290 residues: Barley B recombinant-like protein C (290 aa).

Disordered regions lie at residues 60–90 and 102–183; these read PHHH…YGMM and QPEP…RKNI. Residues 104 to 116 are compositionally biased toward pro residues; sequence EPQPQLQHPPSPP. Positions 138 to 158 are enriched in basic residues; it reads PPKKRQQGRQPKVLRPKKPKK.

The protein belongs to the BBR/BPC family.

It is found in the nucleus. Transcriptional regulator that specifically binds to GA-rich elements (GAGA-repeats) present in regulatory sequences of genes involved in developmental processes. The protein is Barley B recombinant-like protein C of Oryza sativa subsp. japonica (Rice).